Consider the following 535-residue polypeptide: MVTPLKLLNNRYRIIETLGRGGFGETFLAQDTHMPSARKCVIKHLKPVLENPEIPSWLRERFHREAATLEELGENHPQIPQLYAYFSEGEDFYLVQEWIPGLTLTQAHAQKGNFSSTAVEELLLGILPVLEFIHQRRIIHRDIKPDNIILREADGKPILIDFGIIKETMGTLVNPDGRSAYSVALGTPGYMASEQAAGRPVFSSDLYSLGLTAIFLLTGKTPQYLTSDSRTGEILWRQGAPQVSPTLAKVIDQAVRYHPRERFNSATAMAQTLQGNFSNVPMTKGDRPGNTVANGKTKSNHQPTAPTLVVGTPYNANDTQATKVYTQEFTGYTETQEGSPLMKWVVMPLVVLLVIGGGMAAGFWVTSQRRNNPPPAVEEPTEETPIPLPSLEPRPNLFETPSPIPTPATPSPEPTPSPSPSPETTSSPTEDTITPMEPEPSLDEPAPIPEPKPSPSPTISPQPSPTISIPVTPAPVPKPSPSPTPKPTVPPQISPTPQPSNTVPVIPPPENPSAETEPNLPAPPVGEKPIDPEQN.

The 266-residue stretch at 12–277 folds into the Protein kinase domain; the sequence is YRIIETLGRG…AMAQTLQGNF (266 aa). ATP-binding positions include 18–26 and Lys43; that span reads LGRGGFGET. Asp142 (proton acceptor) is an active-site residue. Positions 371-535 are disordered; sequence NNPPPAVEEP…GEKPIDPEQN (165 aa). Residues 402 to 421 are compositionally biased toward pro residues; sequence SPIPTPATPSPEPTPSPSPS. The span at 422-435 shows a compositional bias: low complexity; that stretch reads PETTSSPTEDTITP. 2 stretches are compositionally biased toward pro residues: residues 446–464 and 472–498; these read APIP…PQPS and TPAP…PTPQ.

The protein belongs to the protein kinase superfamily. Ser/Thr protein kinase family.

It catalyses the reaction L-seryl-[protein] + ATP = O-phospho-L-seryl-[protein] + ADP + H(+). It carries out the reaction L-threonyl-[protein] + ATP = O-phospho-L-threonyl-[protein] + ADP + H(+). The chain is Serine/threonine-protein kinase C (spkC) from Synechocystis sp. (strain ATCC 27184 / PCC 6803 / Kazusa).